Reading from the N-terminus, the 97-residue chain is Acylphosphatase (97 aa).

Residues 3-97 (KVKMIVSGRV…PDFTDFNIKY (95 aa)) enclose the Acylphosphatase-like domain. Active-site residues include R18 and N36.

The protein belongs to the acylphosphatase family.

It catalyses the reaction an acyl phosphate + H2O = a carboxylate + phosphate + H(+). This is Acylphosphatase (acyP) from Lactococcus lactis subsp. lactis (strain IL1403) (Streptococcus lactis).